The primary structure comprises 464 residues: UDP-N-acetylmuramate--L-alanine ligase (464 aa).

Position 117–123 (117–123 (GTHGKTT)) interacts with ATP.

Belongs to the MurCDEF family.

It is found in the cytoplasm. The catalysed reaction is UDP-N-acetyl-alpha-D-muramate + L-alanine + ATP = UDP-N-acetyl-alpha-D-muramoyl-L-alanine + ADP + phosphate + H(+). It functions in the pathway cell wall biogenesis; peptidoglycan biosynthesis. Functionally, cell wall formation. In Streptomyces avermitilis (strain ATCC 31267 / DSM 46492 / JCM 5070 / NBRC 14893 / NCIMB 12804 / NRRL 8165 / MA-4680), this protein is UDP-N-acetylmuramate--L-alanine ligase.